Reading from the N-terminus, the 319-residue chain is Glutamyl-Q tRNA(Asp) synthetase (319 aa).

Residues R23–S27 and E59 each bind L-glutamate. The short motif at P26–S36 is the 'HIGH' region element. The Zn(2+) site is built by C115, C117, Y139, and C143. L-glutamate-binding residues include Y197 and R215. Positions K254–Q258 match the 'KMSKS' region motif. Position 257 (K257) interacts with ATP.

It belongs to the class-I aminoacyl-tRNA synthetase family. GluQ subfamily. The cofactor is Zn(2+).

Functionally, catalyzes the tRNA-independent activation of glutamate in presence of ATP and the subsequent transfer of glutamate onto a tRNA(Asp). Glutamate is transferred on the 2-amino-5-(4,5-dihydroxy-2-cyclopenten-1-yl) moiety of the queuosine in the wobble position of the QUC anticodon. This chain is Glutamyl-Q tRNA(Asp) synthetase, found in Bordetella bronchiseptica (strain ATCC BAA-588 / NCTC 13252 / RB50) (Alcaligenes bronchisepticus).